Consider the following 142-residue polypeptide: UPF0102 protein Bamb_0202 (142 aa).

The interval 1 to 23 (MCHAAPAAPASGRGLPHGGGNFS) is disordered.

This sequence belongs to the UPF0102 family.

The protein is UPF0102 protein Bamb_0202 of Burkholderia ambifaria (strain ATCC BAA-244 / DSM 16087 / CCUG 44356 / LMG 19182 / AMMD) (Burkholderia cepacia (strain AMMD)).